We begin with the raw amino-acid sequence, 1118 residues long: DNA mismatch repair protein MSH1, mitochondrial (1118 aa).

768–775 (GPNGGGKS) contributes to the ATP binding site.

Belongs to the DNA mismatch repair MutS family.

The protein resides in the mitochondrion. It is found in the plastid. It localises to the chloroplast. In terms of biological role, DNA mismatch repair protein specifically involved in maintenance of mitochondrial genome configuration by controlling specific rearranged portion. Functions by suppressing asymmetric recombination at some repeat pairs. The chain is DNA mismatch repair protein MSH1, mitochondrial (MSH1) from Arabidopsis thaliana (Mouse-ear cress).